Consider the following 206-residue polypeptide: Alpha-amylase/trypsin inhibitor (206 aa).

Disulfide bonds link cysteine 9–cysteine 205, cysteine 51–cysteine 61, cysteine 66–cysteine 72, cysteine 118–cysteine 194, cysteine 124–cysteine 177, cysteine 132–cysteine 142, cysteine 146–cysteine 155, and cysteine 156–cysteine 164.

It belongs to the thaumatin family.

Functionally, inhibits both trypsin and alpha-amylase. Inhibits the growth of some plant fungal pathogens. This chain is Alpha-amylase/trypsin inhibitor, found in Zea mays (Maize).